Here is a 336-residue protein sequence, read N- to C-terminus: D-alanine--D-alanine ligase (336 aa).

Residues 124-330 (KMWFSALGIP…FATFLEQAIL (207 aa)) enclose the ATP-grasp domain. ATP is bound at residue 154–209 (AFDEWGSVFIKAASQGSSVGCFPAHRREDIPGLVRKAFEYAPFVVVEKTIKARELE). Mg(2+)-binding residues include D284, E297, and N299.

It belongs to the D-alanine--D-alanine ligase family. Requires Mg(2+) as cofactor. It depends on Mn(2+) as a cofactor.

Its subcellular location is the cytoplasm. The enzyme catalyses 2 D-alanine + ATP = D-alanyl-D-alanine + ADP + phosphate + H(+). It participates in cell wall biogenesis; peptidoglycan biosynthesis. Cell wall formation. This is D-alanine--D-alanine ligase from Shewanella amazonensis (strain ATCC BAA-1098 / SB2B).